The sequence spans 216 residues: Large ribosomal subunit protein uL3 (216 aa).

The residue at position 153 (glutamine 153) is an N5-methylglutamine.

This sequence belongs to the universal ribosomal protein uL3 family. As to quaternary structure, part of the 50S ribosomal subunit. Forms a cluster with proteins L14 and L19. In terms of processing, methylated by PrmB.

Functionally, one of the primary rRNA binding proteins, it binds directly near the 3'-end of the 23S rRNA, where it nucleates assembly of the 50S subunit. The sequence is that of Large ribosomal subunit protein uL3 from Burkholderia ambifaria (strain MC40-6).